The sequence spans 299 residues: Acetylglutamate kinase (299 aa).

Residues 68 to 69, Arg90, and Asn195 each bind substrate; that span reads GG.

This sequence belongs to the acetylglutamate kinase family. ArgB subfamily.

Its subcellular location is the cytoplasm. The enzyme catalyses N-acetyl-L-glutamate + ATP = N-acetyl-L-glutamyl 5-phosphate + ADP. It participates in amino-acid biosynthesis; L-arginine biosynthesis; N(2)-acetyl-L-ornithine from L-glutamate: step 2/4. Catalyzes the ATP-dependent phosphorylation of N-acetyl-L-glutamate. This chain is Acetylglutamate kinase, found in Erythrobacter litoralis (strain HTCC2594).